Here is a 293-residue protein sequence, read N- to C-terminus: AKT-interacting protein (293 aa).

Positions M1–S11 are enriched in polar residues. A disordered region spans residues M1–T63. Positions K14–L23 are enriched in basic and acidic residues. S30 bears the Phosphoserine mark. A UBC core domain is found at Y74 to A222. Positions M253–N265 are enriched in basic and acidic residues. A disordered region spans residues M253–T293.

This sequence belongs to the ubiquitin-conjugating enzyme family. FTS subfamily. Component of the FTS/Hook/FHIP complex (FHF complex), composed of AKTIP/FTS, FHIP1B, and one or more members of the Hook family of proteins HOOK1, HOOK2, and HOOK3. Interacts directly with HOOK1, HOOK2 and HOOK3. The FHF complex associates with the homotypic vesicular sorting complex (the HOPS complex). Also interacts with AKT1. May interact with FHIP1A.

Its subcellular location is the cytoplasm. The protein resides in the cell membrane. Functionally, component of the FTS/Hook/FHIP complex (FHF complex). The FHF complex may function to promote vesicle trafficking and/or fusion via the homotypic vesicular protein sorting complex (the HOPS complex). Regulates apoptosis by enhancing phosphorylation and activation of AKT1. Increases release of TNFSF6 via the AKT1/GSK3B/NFATC1 signaling cascade. FHF complex promotes the distribution of AP-4 complex to the perinuclear area of the cell. This Pongo abelii (Sumatran orangutan) protein is AKT-interacting protein (AKTIP).